The sequence spans 214 residues: A-type ATP synthase subunit D (214 aa).

Belongs to the V-ATPase D subunit family. As to quaternary structure, has multiple subunits with at least A(3), B(3), C, D, E, F, H, I and proteolipid K(x).

It localises to the cell membrane. Its function is as follows. Component of the A-type ATP synthase that produces ATP from ADP in the presence of a proton gradient across the membrane. The protein is A-type ATP synthase subunit D of Desulfurococcus sp. (strain SY).